Reading from the N-terminus, the 334-residue chain is Holliday junction branch migration complex subunit RuvB (334 aa).

Positions 4-184 (ADRLIAADAQ…FGIVQRLEFY (181 aa)) are large ATPase domain (RuvB-L). ATP contacts are provided by residues isoleucine 23, arginine 24, glycine 65, lysine 68, threonine 69, threonine 70, 131-133 (EDY), arginine 174, tyrosine 184, and arginine 221. Threonine 69 is a Mg(2+) binding site. The segment at 185–255 (QVADLQHIVG…VAAQALNMLD (71 aa)) is small ATPAse domain (RuvB-S). The segment at 258–334 (AAGFDYMDRK…YQHFGIDRAE (77 aa)) is head domain (RuvB-H). Positions 294, 313, and 318 each coordinate DNA.

This sequence belongs to the RuvB family. Homohexamer. Forms an RuvA(8)-RuvB(12)-Holliday junction (HJ) complex. HJ DNA is sandwiched between 2 RuvA tetramers; dsDNA enters through RuvA and exits via RuvB. An RuvB hexamer assembles on each DNA strand where it exits the tetramer. Each RuvB hexamer is contacted by two RuvA subunits (via domain III) on 2 adjacent RuvB subunits; this complex drives branch migration. In the full resolvosome a probable DNA-RuvA(4)-RuvB(12)-RuvC(2) complex forms which resolves the HJ.

The protein localises to the cytoplasm. The catalysed reaction is ATP + H2O = ADP + phosphate + H(+). Its function is as follows. The RuvA-RuvB-RuvC complex processes Holliday junction (HJ) DNA during genetic recombination and DNA repair, while the RuvA-RuvB complex plays an important role in the rescue of blocked DNA replication forks via replication fork reversal (RFR). RuvA specifically binds to HJ cruciform DNA, conferring on it an open structure. The RuvB hexamer acts as an ATP-dependent pump, pulling dsDNA into and through the RuvAB complex. RuvB forms 2 homohexamers on either side of HJ DNA bound by 1 or 2 RuvA tetramers; 4 subunits per hexamer contact DNA at a time. Coordinated motions by a converter formed by DNA-disengaged RuvB subunits stimulates ATP hydrolysis and nucleotide exchange. Immobilization of the converter enables RuvB to convert the ATP-contained energy into a lever motion, pulling 2 nucleotides of DNA out of the RuvA tetramer per ATP hydrolyzed, thus driving DNA branch migration. The RuvB motors rotate together with the DNA substrate, which together with the progressing nucleotide cycle form the mechanistic basis for DNA recombination by continuous HJ branch migration. Branch migration allows RuvC to scan DNA until it finds its consensus sequence, where it cleaves and resolves cruciform DNA. This Edwardsiella ictaluri (strain 93-146) protein is Holliday junction branch migration complex subunit RuvB.